A 352-amino-acid chain; its full sequence is MSIQTDDFSEQRVIAATPASANEEAIERALRPKQLDEYVGQEKIRGQLEIFITAARQRREALDHTLLFGPPGLGKTTLAHIIAREMGVNLRQTSGPVLERAGDLAALLTNLEANDVLFIDEIHRLSPVVEEILYPALEDYQIDIMIGEGPAARSVRLDLQPFTLVGATTRAGMLTNPLRDRFGIVARLEFYTPLELTRIVTRSSSLLNAPIDEDGAFEIAKRSRGTPRIANRLLRRVRDYAEVKGNGDITKAMADAALVMLDVDPVGFDVMDRKLLEAVLFKFNGGPVGLDNLAAAIGEERDTIEDVLEPYLIQQGFLQRTPRGRIATPVAYAHFGVTAPQTGPNGELWGGQ.

Positions 5–191 (TDDFSEQRVI…FGIVARLEFY (187 aa)) are large ATPase domain (RuvB-L). ATP contacts are provided by residues Leu-30, Arg-31, Gly-72, Lys-75, Thr-76, Thr-77, 138 to 140 (EDY), Arg-181, Tyr-191, and Arg-228. Thr-76 contributes to the Mg(2+) binding site. Residues 192–262 (TPLELTRIVT…MADAALVMLD (71 aa)) form a small ATPAse domain (RuvB-S) region. Residues 265-352 (PVGFDVMDRK…GPNGELWGGQ (88 aa)) form a head domain (RuvB-H) region. Residues Arg-301, Arg-320, and Arg-325 each coordinate DNA.

It belongs to the RuvB family. Homohexamer. Forms an RuvA(8)-RuvB(12)-Holliday junction (HJ) complex. HJ DNA is sandwiched between 2 RuvA tetramers; dsDNA enters through RuvA and exits via RuvB. An RuvB hexamer assembles on each DNA strand where it exits the tetramer. Each RuvB hexamer is contacted by two RuvA subunits (via domain III) on 2 adjacent RuvB subunits; this complex drives branch migration. In the full resolvosome a probable DNA-RuvA(4)-RuvB(12)-RuvC(2) complex forms which resolves the HJ.

Its subcellular location is the cytoplasm. The enzyme catalyses ATP + H2O = ADP + phosphate + H(+). In terms of biological role, the RuvA-RuvB-RuvC complex processes Holliday junction (HJ) DNA during genetic recombination and DNA repair, while the RuvA-RuvB complex plays an important role in the rescue of blocked DNA replication forks via replication fork reversal (RFR). RuvA specifically binds to HJ cruciform DNA, conferring on it an open structure. The RuvB hexamer acts as an ATP-dependent pump, pulling dsDNA into and through the RuvAB complex. RuvB forms 2 homohexamers on either side of HJ DNA bound by 1 or 2 RuvA tetramers; 4 subunits per hexamer contact DNA at a time. Coordinated motions by a converter formed by DNA-disengaged RuvB subunits stimulates ATP hydrolysis and nucleotide exchange. Immobilization of the converter enables RuvB to convert the ATP-contained energy into a lever motion, pulling 2 nucleotides of DNA out of the RuvA tetramer per ATP hydrolyzed, thus driving DNA branch migration. The RuvB motors rotate together with the DNA substrate, which together with the progressing nucleotide cycle form the mechanistic basis for DNA recombination by continuous HJ branch migration. Branch migration allows RuvC to scan DNA until it finds its consensus sequence, where it cleaves and resolves cruciform DNA. The polypeptide is Holliday junction branch migration complex subunit RuvB (Herminiimonas arsenicoxydans).